The following is a 474-amino-acid chain: SHC-transforming protein 3 (474 aa).

A disordered region spans residues 1–27 (MSATRKSRAGDEPLPRPPRGAPHTSDQ). The region spanning 29–214 (LGPGVTYVVK…LDEPWTEEEG (186 aa)) is the PID domain. Residues 215 to 378 (DGPDHPYYNS…RMLEELNAEP (164 aa)) form a CH1 region. Serine 282 bears the Phosphoserine mark. Residues 308–328 (QPVPPQVWPAATSSTESSPRK) are disordered. Residues 379–470 (WYQGEMSRKE…GSELCLQQPV (92 aa)) enclose the SH2 domain.

Interacts with the Trk receptors in a phosphotyrosine-dependent manner. Once activated, binds to GRB2. Interacts with activated EGF receptors. Post-translationally, tyrosine phosphorylated. As to expression, predominantly expressed in the adult brain.

Its function is as follows. Signaling adapter that couples activated growth factor receptors to signaling pathway in neurons. Involved in the signal transduction pathways of neurotrophin-activated Trk receptors in cortical neurons. The sequence is that of SHC-transforming protein 3 (Shc3) from Mus musculus (Mouse).